We begin with the raw amino-acid sequence, 289 residues long: ATP synthase mitochondrial F1 complex assembly factor 2 (289 aa).

The transit peptide at 1-40 directs the protein to the mitochondrion; that stretch reads MWRRCLRLRDVGRRLLNLPRSGLTASEGLGPKLPTPIRAY. An N6-succinyllysine modification is found at K133.

Belongs to the ATP12 family. In terms of assembly, interacts with ATP5F1B; involved in the assembly of the F1 component of the mitochondrial ATP synthase (ATPase). Interacts with FMC1.

It is found in the mitochondrion inner membrane. Plays a role in the assembly of the F1 component of the mitochondrial ATP synthase (ATPase). In Bos taurus (Bovine), this protein is ATP synthase mitochondrial F1 complex assembly factor 2 (ATPAF2).